The following is a 177-amino-acid chain: Protein BROTHER of FT and TFL 1 (177 aa).

It belongs to the phosphatidylethanolamine-binding protein family.

It localises to the cytoplasm. May form complexes with phosphorylated ligands by interfering with kinases and their effectors. The polypeptide is Protein BROTHER of FT and TFL 1 (BFT) (Arabidopsis thaliana (Mouse-ear cress)).